We begin with the raw amino-acid sequence, 177 residues long: ATP synthase subunit delta (177 aa).

This sequence belongs to the ATPase delta chain family. As to quaternary structure, F-type ATPases have 2 components, F(1) - the catalytic core - and F(0) - the membrane proton channel. F(1) has five subunits: alpha(3), beta(3), gamma(1), delta(1), epsilon(1). F(0) has three main subunits: a(1), b(2) and c(10-14). The alpha and beta chains form an alternating ring which encloses part of the gamma chain. F(1) is attached to F(0) by a central stalk formed by the gamma and epsilon chains, while a peripheral stalk is formed by the delta and b chains.

The protein resides in the cell membrane. F(1)F(0) ATP synthase produces ATP from ADP in the presence of a proton or sodium gradient. F-type ATPases consist of two structural domains, F(1) containing the extramembraneous catalytic core and F(0) containing the membrane proton channel, linked together by a central stalk and a peripheral stalk. During catalysis, ATP synthesis in the catalytic domain of F(1) is coupled via a rotary mechanism of the central stalk subunits to proton translocation. Functionally, this protein is part of the stalk that links CF(0) to CF(1). It either transmits conformational changes from CF(0) to CF(1) or is implicated in proton conduction. The sequence is that of ATP synthase subunit delta from Buchnera aphidicola subsp. Acyrthosiphon pisum (strain APS) (Acyrthosiphon pisum symbiotic bacterium).